Here is a 95-residue protein sequence, read N- to C-terminus: Large ribosomal subunit protein bL25 (95 aa).

This sequence belongs to the bacterial ribosomal protein bL25 family. In terms of assembly, part of the 50S ribosomal subunit; part of the 5S rRNA/L5/L18/L25 subcomplex. Contacts the 5S rRNA. Binds to the 5S rRNA independently of L5 and L18.

Its function is as follows. This is one of the proteins that binds to the 5S RNA in the ribosome where it forms part of the central protuberance. The chain is Large ribosomal subunit protein bL25 from Shewanella oneidensis (strain ATCC 700550 / JCM 31522 / CIP 106686 / LMG 19005 / NCIMB 14063 / MR-1).